Here is a 695-residue protein sequence, read N- to C-terminus: NADPH--cytochrome P450 reductase (695 aa).

The Lumenal portion of the chain corresponds to M1–D8. The helical transmembrane segment at L9–V31 threads the bilayer. Over A32–S695 the chain is Cytoplasmic. One can recognise a Flavodoxin-like domain in the interval C66–W221. FMN is bound by residues S72–A77, A123–G126, L169–N178, and D204. An FAD-binding FR-type domain is found at H277–P538. R296 serves as a coordination point for NADP(+). Residues R451–S454, T469–V471, and G486–T489 contribute to the FAD site. Residues T552, S614–R615, K620–Q624, and E656 contribute to the NADP(+) site. W694 serves as a coordination point for FAD.

This sequence belongs to the NADPH--cytochrome P450 reductase family. In the N-terminal section; belongs to the flavodoxin family. The protein in the C-terminal section; belongs to the flavoprotein pyridine nucleotide cytochrome reductase family. The cofactor is FAD. Requires FMN as cofactor.

The protein localises to the endoplasmic reticulum membrane. The protein resides in the mitochondrion outer membrane. It is found in the cell membrane. It catalyses the reaction 2 oxidized [cytochrome P450] + NADPH = 2 reduced [cytochrome P450] + NADP(+) + H(+). This enzyme is required for electron transfer from NADP to cytochrome P450 in microsomes. It can also provide electron transfer to heme oxygenase and cytochrome B5. Involved in ergosterol biosynthesis. The sequence is that of NADPH--cytochrome P450 reductase from Aspergillus oryzae (strain ATCC 42149 / RIB 40) (Yellow koji mold).